We begin with the raw amino-acid sequence, 132 residues long: Small ribosomal subunit protein uS8 (132 aa).

The protein belongs to the universal ribosomal protein uS8 family. Part of the 30S ribosomal subunit. Contacts proteins S5 and S12.

Its function is as follows. One of the primary rRNA binding proteins, it binds directly to 16S rRNA central domain where it helps coordinate assembly of the platform of the 30S subunit. The polypeptide is Small ribosomal subunit protein uS8 (Coprothermobacter proteolyticus (strain ATCC 35245 / DSM 5265 / OCM 4 / BT)).